The primary structure comprises 1382 residues: DNA-directed RNA polymerase subunit beta (1382 aa).

This sequence belongs to the RNA polymerase beta chain family. The RNAP catalytic core consists of 2 alpha, 1 beta, 1 beta' and 1 omega subunit. When a sigma factor is associated with the core the holoenzyme is formed, which can initiate transcription.

The enzyme catalyses RNA(n) + a ribonucleoside 5'-triphosphate = RNA(n+1) + diphosphate. DNA-dependent RNA polymerase catalyzes the transcription of DNA into RNA using the four ribonucleoside triphosphates as substrates. The sequence is that of DNA-directed RNA polymerase subunit beta from Aliarcobacter butzleri (strain RM4018) (Arcobacter butzleri).